The chain runs to 914 residues: Translation initiation factor IF-2 (914 aa).

Positions 58 to 160 (KTEKKQTAKK…EAEPKIEVMP (103 aa)) are disordered. The segment covering 70-91 (KKDTVKKDTVKKTAVKKDDSKA) has biased composition (basic and acidic residues). The segment covering 92 to 103 (AKKTKPIAKKSA) has biased composition (basic residues). The span at 104-160 (PKTEKKVEKKVESKISKPDNEILEAKPEISKPEIKAEPKKEEIEQKQEAEPKIEVMP) shows a compositional bias: basic and acidic residues. One can recognise a tr-type G domain in the interval 413 to 582 (ERVPVITIMG…LLQADLLELK (170 aa)). A G1 region spans residues 422–429 (GHVDHGKT). 422 to 429 (GHVDHGKT) contacts GTP. Positions 447-451 (GITQH) are G2. The interval 468 to 471 (DTPG) is G3. GTP is bound by residues 468–472 (DTPGH) and 522–525 (NKMD). The segment at 522 to 525 (NKMD) is G4. Residues 558–560 (SAK) form a G5 region.

It belongs to the TRAFAC class translation factor GTPase superfamily. Classic translation factor GTPase family. IF-2 subfamily.

The protein resides in the cytoplasm. Functionally, one of the essential components for the initiation of protein synthesis. Protects formylmethionyl-tRNA from spontaneous hydrolysis and promotes its binding to the 30S ribosomal subunits. Also involved in the hydrolysis of GTP during the formation of the 70S ribosomal complex. In Campylobacter hominis (strain ATCC BAA-381 / DSM 21671 / CCUG 45161 / LMG 19568 / NCTC 13146 / CH001A), this protein is Translation initiation factor IF-2.